The following is a 444-amino-acid chain: S-locus-specific glycoprotein (444 aa).

An N-terminal signal peptide occupies residues M1 to S28. Residues T31 to W159 form the Bulb-type lectin domain. N43, N125, N243, and N396 each carry an N-linked (GlcNAc...) asparagine glycan. The region spanning C356–A437 is the PAN domain. 2 disulfide bridges follow: C387–C412 and C395–C397.

As to expression, stigma.

Involved in sporophytic self-incompatibility system (the inability of flowering plants to achieve self-fertilization). The polypeptide is S-locus-specific glycoprotein (SLSG) (Brassica oleracea var. alboglabra (Chinese kale)).